The sequence spans 483 residues: Betaine aldehyde dehydrogenase (483 aa).

Residues I27 and D93 each coordinate K(+). 149-151 lines the NAD(+) pocket; sequence GAW. The Charge relay system role is filled by K161. An NAD(+)-binding site is contributed by 175–178; it reads KPSE. K(+) is bound at residue V179. Residue 228–231 coordinates NAD(+); sequence SVPT. V243 is a binding site for K(+). Residue E249 is the Proton acceptor of the active site. The NAD(+) site is built by G251, C283, and E380. C283 functions as the Nucleophile in the catalytic mechanism. C283 is subject to Cysteine sulfenic acid (-SOH). Residues K450 and G453 each coordinate K(+). E457 serves as the catalytic Charge relay system.

It belongs to the aldehyde dehydrogenase family. In terms of assembly, dimer of dimers. K(+) serves as cofactor.

The enzyme catalyses betaine aldehyde + NAD(+) + H2O = glycine betaine + NADH + 2 H(+). It participates in amine and polyamine biosynthesis; betaine biosynthesis via choline pathway; betaine from betaine aldehyde: step 1/1. Involved in the biosynthesis of the osmoprotectant glycine betaine. Catalyzes the irreversible oxidation of betaine aldehyde to the corresponding acid. The polypeptide is Betaine aldehyde dehydrogenase (Cereibacter sphaeroides (strain ATCC 17023 / DSM 158 / JCM 6121 / CCUG 31486 / LMG 2827 / NBRC 12203 / NCIMB 8253 / ATH 2.4.1.) (Rhodobacter sphaeroides)).